The chain runs to 467 residues: Probable tryptophanase (467 aa).

An N6-(pyridoxal phosphate)lysine modification is found at Lys-263.

It belongs to the beta-eliminating lyase family. The cofactor is pyridoxal 5'-phosphate.

The enzyme catalyses L-tryptophan + H2O = indole + pyruvate + NH4(+). It participates in amino-acid degradation; L-tryptophan degradation via pyruvate pathway; indole and pyruvate from L-tryptophan: step 1/1. The protein is Probable tryptophanase (tnaA) of Aeropyrum pernix (strain ATCC 700893 / DSM 11879 / JCM 9820 / NBRC 100138 / K1).